The sequence spans 462 residues: MGKEKTHINIVVIGHVDSGKSTTTGHLIYKCGGIDKRTIEKFEKEAAEMGKGSFKYAWVLDKLKAERERGITIDISLWKFETSKYYVTIIDAPGHRDFIKNMITGTSQADCAVLIVAAGVGEFEAGISKNGQTREHALLAYTLGVKQLIVGVNKMDSTEPPYSQKRYEEIVKEVSTYIKKIGYNPDTVAFVPISGWNGDNMLEPSANMPWFKGWKVTRKDGNASGTTLLEALDCILPPTRPTDKPLRLPLQDVYKIGGIGTVPVGRVETGVLKPGMVVTFAPVNVTTEVKSVEMHHEALSEALPGDNVGFNVKNVSVKDVRRGNVAGDSKNDPPMEAAGFTAQVIILNHPGQISAGYAPVLDCHTAHIACKFAELKEKIDRRSGKKLEDGPKFLKSGDAAIVDMVPGKPMCVESFSDYPPLGRFAVRDMRQTVAVGVIKAVDKKAAGAGKVTKSAQKAQKAK.

Position 2 is a n,N,N-trimethylglycine (Gly2). The region spanning 5-242 (KTHINIVVIG…DCILPPTRPT (238 aa)) is the tr-type G domain. Positions 14–21 (GHVDSGKS) are G1. 14-21 (GHVDSGKS) provides a ligand contact to GTP. Position 36 is an N6,N6,N6-trimethyllysine; alternate (Lys36). At Lys36 the chain carries N6,N6-dimethyllysine; alternate. Residue Lys36 is modified to N6-methyllysine; alternate. Position 55 is an N6,N6-dimethyllysine (Lys55). Residues 70-74 (GITID) are G2. The residue at position 79 (Lys79) is an N6,N6,N6-trimethyllysine; by EEF1AKMT1. The interval 91–94 (DAPG) is G3. A GTP-binding site is contributed by 153–156 (NKMD). Residues 153–156 (NKMD) form a G4 region. Position 165 is an N6,N6,N6-trimethyllysine; alternate; by EEF1AKMT3 (Lys165). Lys165 is subject to N6,N6-dimethyllysine; alternate; by EEF1AKMT3. N6-acetyllysine; alternate is present on Lys165. Lys165 is subject to N6-methyllysine; alternate; by EEF1AKMT3. At Lys172 the chain carries N6-acetyllysine. 194–196 (SGW) lines the GTP pocket. Residues 194-196 (SGW) are G5. N6-acetyllysine is present on Lys273. Phosphoserine; by TGFBR1 is present on Ser300. Glu301 bears the 5-glutamyl glycerylphosphorylethanolamine mark. An N6,N6,N6-trimethyllysine; by EEF1AKMT2 modification is found at Lys318. Glu374 carries the post-translational modification 5-glutamyl glycerylphosphorylethanolamine. Lys385 is covalently cross-linked (Glycyl lysine isopeptide (Lys-Gly) (interchain with G-Cter in ubiquitin)). The residue at position 392 (Lys392) is an N6-acetyllysine; alternate. Position 392 is an N6-succinyllysine; alternate (Lys392). Phosphothreonine; by PASK is present on Thr432. At Lys439 the chain carries N6-acetyllysine.

This sequence belongs to the TRAFAC class translation factor GTPase superfamily. Classic translation factor GTPase family. EF-Tu/EF-1A subfamily. In terms of assembly, found in a nuclear export complex with XPO5, EEF1A1, Ran and aminoacylated tRNA. Interacts with PARP1 and TXK. Interacts with KARS1. May interact with ERGIC2. Interacts with IFIT1 (via TPR repeats 4-7). Interacts with DLC1, facilitating distribution to the membrane periphery and ruffles upon growth factor stimulation. Interacts with ZPR1; the interaction occurs in a epidermal growth factor (EGF)-dependent manner. Interacts with PPP1R16B. Interacts with SPHK1 and SPHK2; both interactions increase SPHK1 and SPHK2 kinase activity. Interacts with guanyl-nucleotide exchange factor EEF1B2. Interacts (via middle-region) with HTATIP2 (via N-terminus); the interaction is direct and competes with EEF1A1 binding to guanyl-nucleotide exchange factor EEF1B2, thereby inhibiting GDP for GTP exchange and reactivation of EEF1A1. Interacts with tRNA. In terms of processing, ISGylated. Post-translationally, phosphorylated by TXK. Phosphorylation by PASK increases translation efficiency. Phosphorylated by ROCK2. Phosphorylation by TGFBR1 inhibits translation elongation. Trimethylated at Lys-79 by EEF1AKMT1. Methylated at Lys-165 by EEF1AKMT3, methylation by EEF1AKMT3 is dynamic as well as inducible by stress conditions, such as ER-stress, and plays a regulatory role on mRNA translation. Trimethylated at Lys-318 by EEF1AKMT2. Mono-, di-, and trimethylated at Lys-36 by EEF1AKMT4; trimethylated form is predominant. Methylation by EEF1AKMT4 contributes to the fine-tuning of translation rates for a subset of tRNAs. Trimethylated at Gly-2 by METTL13. Mono- and dimethylated at Lys-55 by METTL13; dimethylated form is predominant. In terms of processing, ubiquitinated at Lys-385 by RNF14 in response to ribosome collisions (ribosome stalling), leading to its degradation by the proteasome and rescue of stalled ribosomes.

It localises to the cytoplasm. The protein resides in the nucleus. Its subcellular location is the nucleolus. It is found in the cell membrane. It carries out the reaction GTP + H2O = GDP + phosphate + H(+). In terms of biological role, translation elongation factor that catalyzes the GTP-dependent binding of aminoacyl-tRNA (aa-tRNA) to the A-site of ribosomes during the elongation phase of protein synthesis. Base pairing between the mRNA codon and the aa-tRNA anticodon promotes GTP hydrolysis, releasing the aa-tRNA from EEF1A1 and allowing its accommodation into the ribosome. The growing protein chain is subsequently transferred from the P-site peptidyl tRNA to the A-site aa-tRNA, extending it by one amino acid through ribosome-catalyzed peptide bond formation. Also plays a role in the positive regulation of IFNG transcription in T-helper 1 cells as part of an IFNG promoter-binding complex with TXK and PARP1. Also plays a role in cytoskeleton organization by promoting actin bundling. The sequence is that of Elongation factor 1-alpha 1 (EEF1A1) from Bos taurus (Bovine).